The primary structure comprises 53 residues: Large ribosomal subunit protein eL24 (53 aa).

Cys-4, Cys-7, Cys-30, and Cys-34 together coordinate Zn(2+). The segment at 4–34 adopts a C4-type zinc-finger fold; it reads CSFCNKEIEEGTGKMYVKKDGSIYFFCSSKC.

This sequence belongs to the eukaryotic ribosomal protein eL24 family. As to quaternary structure, part of the 50S ribosomal subunit. Forms a cluster with proteins L3 and L14. Zn(2+) serves as cofactor.

Binds to the 23S rRNA. The polypeptide is Large ribosomal subunit protein eL24 (Methanobrevibacter smithii (strain ATCC 35061 / DSM 861 / OCM 144 / PS)).